The primary structure comprises 226 residues: Ribosome maturation factor RimM (226 aa).

The region spanning 144–225 is the PRC barrel domain; the sequence is ADEFYWVDLI…RIVVDWEADY (82 aa).

This sequence belongs to the RimM family. Binds ribosomal protein uS19.

The protein resides in the cytoplasm. Its function is as follows. An accessory protein needed during the final step in the assembly of 30S ribosomal subunit, possibly for assembly of the head region. Essential for efficient processing of 16S rRNA. May be needed both before and after RbfA during the maturation of 16S rRNA. It has affinity for free ribosomal 30S subunits but not for 70S ribosomes. The protein is Ribosome maturation factor RimM of Burkholderia ambifaria (strain ATCC BAA-244 / DSM 16087 / CCUG 44356 / LMG 19182 / AMMD) (Burkholderia cepacia (strain AMMD)).